A 274-amino-acid chain; its full sequence is 2,3,4,5-tetrahydropyridine-2,6-dicarboxylate N-succinyltransferase (274 aa).

Substrate-binding residues include R104 and D141.

This sequence belongs to the transferase hexapeptide repeat family. In terms of assembly, homotrimer.

Its subcellular location is the cytoplasm. The catalysed reaction is (S)-2,3,4,5-tetrahydrodipicolinate + succinyl-CoA + H2O = (S)-2-succinylamino-6-oxoheptanedioate + CoA. It participates in amino-acid biosynthesis; L-lysine biosynthesis via DAP pathway; LL-2,6-diaminopimelate from (S)-tetrahydrodipicolinate (succinylase route): step 1/3. This chain is 2,3,4,5-tetrahydropyridine-2,6-dicarboxylate N-succinyltransferase, found in Shewanella pealeana (strain ATCC 700345 / ANG-SQ1).